The chain runs to 208 residues: Thymidylate kinase (208 aa).

An ATP-binding site is contributed by 10–17 (GGEGAGKS).

It belongs to the thymidylate kinase family.

The catalysed reaction is dTMP + ATP = dTDP + ADP. In terms of biological role, phosphorylation of dTMP to form dTDP in both de novo and salvage pathways of dTTP synthesis. This Alcanivorax borkumensis (strain ATCC 700651 / DSM 11573 / NCIMB 13689 / SK2) protein is Thymidylate kinase.